Here is an 81-residue protein sequence, read N- to C-terminus: Cytotoxin 1a (81 aa).

The signal sequence occupies residues 1-21 (MKTLLLTLVVVTIVCLDLGYT). 4 cysteine pairs are disulfide-bonded: C24–C42, C35–C59, C63–C74, and C75–C80.

The protein belongs to the three-finger toxin family. Short-chain subfamily. Type IA cytotoxin sub-subfamily. Monomer in solution; Homodimer and oligomer in the presence of negatively charged lipids forming a pore with a size ranging between 20 and 30 Angstroms. As to expression, expressed by the venom gland.

The protein localises to the secreted. It localises to the target cell membrane. Its function is as follows. Shows cytolytic activity on many different cells by forming pore in lipid membranes. In vivo, increases heart rate or kills the animal by cardiac arrest. In addition, it binds to heparin with high affinity, interacts with Kv channel-interacting protein 1 (KCNIP1) in a calcium-independent manner, and binds to integrin alpha-V/beta-3 (ITGAV/ITGB3) with moderate affinity. In Naja atra (Chinese cobra), this protein is Cytotoxin 1a.